A 24-amino-acid polypeptide reads, in one-letter code: LEEQSFSFTKFSTDQQNLILQAHY.

This sequence belongs to the leguminous lectin family. In terms of assembly, homotetramer.

Functionally, agglutinates erythrocytes of blood group A. Binds in decreasing order of affinity: N-acetyl-D-galactosamine, D-galactose, and D-galactosamine. The chain is Lectin from Crotalaria pallida (Smooth rattlebox).